The primary structure comprises 461 residues: Ornithine decarboxylase (461 aa).

Lysine 69 is subject to N6-(pyridoxal phosphate)lysine. Residues serine 200, glycine 237, and 274 to 277 each bind pyridoxal 5'-phosphate; that span reads EPGR. Position 303 is a phosphoserine; by CK2 (serine 303). 331-332 provides a ligand contact to substrate; the sequence is YD. Cysteine 360 (proton donor; shared with dimeric partner) is an active-site residue. Cysteine 360 is modified (S-nitrosocysteine). Aspartate 361 contacts substrate. Position 389 (tyrosine 389) interacts with pyridoxal 5'-phosphate.

Belongs to the Orn/Lys/Arg decarboxylase class-II family. Homodimer. Only the dimer is catalytically active, as the active sites are constructed of residues from both monomers. It depends on pyridoxal 5'-phosphate as a cofactor.

It carries out the reaction L-ornithine + H(+) = putrescine + CO2. The protein operates within amine and polyamine biosynthesis; putrescine biosynthesis via L-ornithine pathway; putrescine from L-ornithine: step 1/1. Its activity is regulated as follows. Inhibited by antizymes (AZs) OAZ1, OAZ2 and OAZ3 in response to polyamine levels. AZs inhibit the assembly of the functional homodimer by binding to ODC monomers. Additionally, OAZ1 targets ODC monomers for ubiquitin-independent proteolytic destruction by the 26S proteasome. In terms of biological role, catalyzes the first and rate-limiting step of polyamine biosynthesis that converts ornithine into putrescine, which is the precursor for the polyamines, spermidine and spermine. Polyamines are essential for cell proliferation and are implicated in cellular processes, ranging from DNA replication to apoptosis. This Mus pahari (Gairdner's shrew-mouse) protein is Ornithine decarboxylase (Odc1).